An 870-amino-acid chain; its full sequence is UvrABC system protein B (870 aa).

One can recognise a Helicase ATP-binding domain in the interval 20–410; sequence EGVDNNDRTQ…VFAEQVIRPT (391 aa). 33–40 is a binding site for ATP; it reads GVTGSGKT. Residues 86 to 109 carry the Beta-hairpin motif; it reads YYDYYQPEAYVPRTDTFIEKESSI. One can recognise a Helicase C-terminal domain in the interval 425–591; the sequence is QVDDVVGEIR…SVKSRISDIL (167 aa). Residues 620 to 655 form the UVR domain; sequence KAHLDAMEKQMRDAAANLDFEKAARIRDEIKRLREM. Disordered regions lie at residues 671–698 and 741–870; these read ESPVSGREKGKHNKGVAKHRTAEEQERF and AKPS…RPGK. Basic residues predominate over residues 679–689; it reads KGKHNKGVAKH. Basic and acidic residues-rich tracts occupy residues 793-808 and 827-836; these read NSLDEMTVRRTEKPVE and TDVKDRDDSA. The span at 858-870 shows a compositional bias: basic residues; that stretch reads EKRRPGKTGRPGK.

This sequence belongs to the UvrB family. Forms a heterotetramer with UvrA during the search for lesions. Interacts with UvrC in an incision complex.

It localises to the cytoplasm. The UvrABC repair system catalyzes the recognition and processing of DNA lesions. A damage recognition complex composed of 2 UvrA and 2 UvrB subunits scans DNA for abnormalities. Upon binding of the UvrA(2)B(2) complex to a putative damaged site, the DNA wraps around one UvrB monomer. DNA wrap is dependent on ATP binding by UvrB and probably causes local melting of the DNA helix, facilitating insertion of UvrB beta-hairpin between the DNA strands. Then UvrB probes one DNA strand for the presence of a lesion. If a lesion is found the UvrA subunits dissociate and the UvrB-DNA preincision complex is formed. This complex is subsequently bound by UvrC and the second UvrB is released. If no lesion is found, the DNA wraps around the other UvrB subunit that will check the other stand for damage. The sequence is that of UvrABC system protein B from Mesorhizobium japonicum (strain LMG 29417 / CECT 9101 / MAFF 303099) (Mesorhizobium loti (strain MAFF 303099)).